Consider the following 694-residue polypeptide: Elongation factor G (694 aa).

In terms of domain architecture, tr-type G spans 9–288 (DAIRNIGIMA…VIVKWLPSPL (280 aa)). Residues 18 to 25 (AHIDAGKT), 82 to 86 (DTPGH), and 136 to 139 (NKMD) each bind GTP.

It belongs to the TRAFAC class translation factor GTPase superfamily. Classic translation factor GTPase family. EF-G/EF-2 subfamily.

Its subcellular location is the cytoplasm. Functionally, catalyzes the GTP-dependent ribosomal translocation step during translation elongation. During this step, the ribosome changes from the pre-translocational (PRE) to the post-translocational (POST) state as the newly formed A-site-bound peptidyl-tRNA and P-site-bound deacylated tRNA move to the P and E sites, respectively. Catalyzes the coordinated movement of the two tRNA molecules, the mRNA and conformational changes in the ribosome. This chain is Elongation factor G, found in Chlamydia trachomatis serovar L2 (strain ATCC VR-902B / DSM 19102 / 434/Bu).